Reading from the N-terminus, the 76-residue chain is Small ribosomal subunit protein bS18 (76 aa).

Belongs to the bacterial ribosomal protein bS18 family. Part of the 30S ribosomal subunit. Forms a tight heterodimer with protein bS6.

Binds as a heterodimer with protein bS6 to the central domain of the 16S rRNA, where it helps stabilize the platform of the 30S subunit. This Xanthomonas euvesicatoria pv. vesicatoria (strain 85-10) (Xanthomonas campestris pv. vesicatoria) protein is Small ribosomal subunit protein bS18.